Here is a 292-residue protein sequence, read N- to C-terminus: MTEFDLSTREGRWKHFGSVDPIEGTKPTTKNEMTDLQSTHKDFLFEIEEVGIKNLVYPVLVDQYQTAGTFSFSTSLTKDEKGINMSRIIESVEKHYDNGIELEFNTLYQVLRTLQTNMKQNAAGVDVSGKWFFDRYSPTTNIKAVGNADVTYGLAIDGDKVTRKELTIEATVTTLCPCSKEISEYSAHNQRGVVTVKTYINKDQDIVDDYKNKILDAMEANASSILYPILKRPDEKRVTERAYENPRFVEDLIRLIAADLVEFDWLDGFDIECRNEESIHQHDAFAKLKYRK.

The protein belongs to the GTP cyclohydrolase IV family.

It carries out the reaction GTP + H2O = 7,8-dihydroneopterin 3'-triphosphate + formate + H(+). It functions in the pathway cofactor biosynthesis; 7,8-dihydroneopterin triphosphate biosynthesis; 7,8-dihydroneopterin triphosphate from GTP: step 1/1. Its function is as follows. Converts GTP to 7,8-dihydroneopterin triphosphate. This Staphylococcus aureus (strain Newman) protein is GTP cyclohydrolase FolE2.